The sequence spans 506 residues: Bifunctional purine biosynthesis protein PurH (506 aa).

One can recognise an MGS-like domain in the interval 1-142 (MRAIISVYRK…KNFFRVVILV (142 aa)).

This sequence belongs to the PurH family.

The enzyme catalyses (6R)-10-formyltetrahydrofolate + 5-amino-1-(5-phospho-beta-D-ribosyl)imidazole-4-carboxamide = 5-formamido-1-(5-phospho-D-ribosyl)imidazole-4-carboxamide + (6S)-5,6,7,8-tetrahydrofolate. The catalysed reaction is IMP + H2O = 5-formamido-1-(5-phospho-D-ribosyl)imidazole-4-carboxamide. The protein operates within purine metabolism; IMP biosynthesis via de novo pathway; 5-formamido-1-(5-phospho-D-ribosyl)imidazole-4-carboxamide from 5-amino-1-(5-phospho-D-ribosyl)imidazole-4-carboxamide (10-formyl THF route): step 1/1. It participates in purine metabolism; IMP biosynthesis via de novo pathway; IMP from 5-formamido-1-(5-phospho-D-ribosyl)imidazole-4-carboxamide: step 1/1. This chain is Bifunctional purine biosynthesis protein PurH, found in Aquifex aeolicus (strain VF5).